The following is a 216-amino-acid chain: Protein Syd (216 aa).

Belongs to the Syd family.

The protein localises to the cell inner membrane. Its function is as follows. Interacts with the SecY protein in vivo. May bind preferentially to an uncomplexed state of SecY, thus functioning either as a chelating agent for excess SecY in the cell or as a regulatory factor that negatively controls the translocase function. This chain is Protein Syd, found in Shewanella sp. (strain W3-18-1).